Consider the following 346-residue polypeptide: uncharacterized protein (346 aa).

The protein belongs to the Gfo/Idh/MocA family.

This is an uncharacterized protein from Escherichia coli (strain K12).